The primary structure comprises 155 residues: Small ribosomal subunit protein uS7c (155 aa).

The protein belongs to the universal ribosomal protein uS7 family. Part of the 30S ribosomal subunit.

Its subcellular location is the plastid. The protein localises to the chloroplast. Its function is as follows. One of the primary rRNA binding proteins, it binds directly to 16S rRNA where it nucleates assembly of the head domain of the 30S subunit. The chain is Small ribosomal subunit protein uS7c (rps7) from Lilium superbum (Turk's cap lily).